We begin with the raw amino-acid sequence, 347 residues long: sn-1 oleoyl-lipid 12-desaturase (347 aa).

The next 2 membrane-spanning stretches (helical) occupy residues 41–63 and 67–85; these read AWSRVLLSVAAVVGCYALLAIAP and LLPVWFLTGTTLTGFFVIG. The Histidine box-1 signature appears at 86 to 90; sequence HDCGH. The helical transmembrane segment at 98 to 118 threads the bilayer; sequence WVNNLVGHLAFLPLIYPFHSW. Residues 122–126 carry the Histidine box-2 motif; that stretch reads HNHHH. 3 helical membrane passes run 164–184, 196–216, and 218–238; these read LWWLASVIHQLKLHFNWFAFE, LFVIIAGAIAFPVMFYTLGVW, and VVKFWLMPWLGYHFWMSTFTL. The Histidine box-3 signature appears at 286–290; the sequence is HHLST.

Belongs to the fatty acid desaturase type 2 family. Fe(2+) serves as cofactor.

It is found in the membrane. It carries out the reaction a 1-[(9Z)-octadecenoyl]-2-acyl-glycerolipid + 2 reduced [2Fe-2S]-[ferredoxin] + O2 + 2 H(+) = a 1-[(9Z,12Z)-octadecdienoyl]-2-acyl-glycerolipid + 2 oxidized [2Fe-2S]-[ferredoxin] + 2 H2O. It participates in lipid metabolism; polyunsaturated fatty acid biosynthesis. Functionally, desaturase involved in fatty acid biosynthesis. Introduces a double bond at carbon 12 of oleoyl groups (18:1) attached to the sn-1 position of the glycerol moiety of membrane glycerolipids. Can also efficiently catalyze the desaturation of palmitoleic acid (16:1) in vitro. In Picosynechococcus sp. (strain ATCC 27264 / PCC 7002 / PR-6) (Agmenellum quadruplicatum), this protein is sn-1 oleoyl-lipid 12-desaturase.